The following is a 167-amino-acid chain: NADH-quinone oxidoreductase subunit B 2 (167 aa).

4 residues coordinate [4Fe-4S] cluster: cysteine 39, cysteine 40, cysteine 104, and cysteine 134.

This sequence belongs to the complex I 20 kDa subunit family. As to quaternary structure, NDH-1 is composed of 14 different subunits. Subunits NuoB, C, D, E, F, and G constitute the peripheral sector of the complex. [4Fe-4S] cluster is required as a cofactor.

The protein localises to the cell inner membrane. It catalyses the reaction a quinone + NADH + 5 H(+)(in) = a quinol + NAD(+) + 4 H(+)(out). Functionally, NDH-1 shuttles electrons from NADH, via FMN and iron-sulfur (Fe-S) centers, to quinones in the respiratory chain. Couples the redox reaction to proton translocation (for every two electrons transferred, four hydrogen ions are translocated across the cytoplasmic membrane), and thus conserves the redox energy in a proton gradient. The protein is NADH-quinone oxidoreductase subunit B 2 of Burkholderia mallei (strain NCTC 10247).